We begin with the raw amino-acid sequence, 342 residues long: Nucleoid-associated protein Sputcn32_2288 (342 aa).

The protein belongs to the YejK family.

It localises to the cytoplasm. The protein resides in the nucleoid. The polypeptide is Nucleoid-associated protein Sputcn32_2288 (Shewanella putrefaciens (strain CN-32 / ATCC BAA-453)).